Consider the following 211-residue polypeptide: Cytidylate kinase (211 aa).

Position 7–15 (7–15 (GPAASGKGT)) interacts with ATP.

This sequence belongs to the cytidylate kinase family. Type 1 subfamily.

The protein localises to the cytoplasm. It catalyses the reaction CMP + ATP = CDP + ADP. The enzyme catalyses dCMP + ATP = dCDP + ADP. This is Cytidylate kinase from Rhodopseudomonas palustris (strain BisA53).